Here is a 47-residue protein sequence, read N- to C-terminus: Large ribosomal subunit protein bL33 (47 aa).

Belongs to the bacterial ribosomal protein bL33 family.

This is Large ribosomal subunit protein bL33 from Staphylococcus capitis.